A 422-amino-acid polypeptide reads, in one-letter code: Vitellogenin-2 (422 aa).

An N-terminal signal peptide occupies residues 1–20 (MNPLTIFCLVAVLLSAATAH). Disordered regions lie at residues 161 to 191 (QGEQ…KPNG) and 399 to 422 (FGKS…GRPN). Residues 180–189 (NRPNGQQPKP) are compositionally biased toward polar residues.

Belongs to the AB hydrolase superfamily. Lipase family. In terms of tissue distribution, synthesized in the fat body and ovarian follicle cells and accumulate in the oocyte.

The protein resides in the secreted. Functionally, vitellogenin is the major yolk protein of eggs where it is used as a food source during embryogenesis. The chain is Vitellogenin-2 (VG2-delta) from Ceratitis capitata (Mediterranean fruit fly).